The primary structure comprises 305 residues: UDP-3-O-acyl-N-acetylglucosamine deacetylase (305 aa).

Zn(2+) contacts are provided by histidine 79, histidine 238, and aspartate 242. Histidine 265 acts as the Proton donor in catalysis.

The protein belongs to the LpxC family. Zn(2+) serves as cofactor.

It carries out the reaction a UDP-3-O-[(3R)-3-hydroxyacyl]-N-acetyl-alpha-D-glucosamine + H2O = a UDP-3-O-[(3R)-3-hydroxyacyl]-alpha-D-glucosamine + acetate. Its pathway is glycolipid biosynthesis; lipid IV(A) biosynthesis; lipid IV(A) from (3R)-3-hydroxytetradecanoyl-[acyl-carrier-protein] and UDP-N-acetyl-alpha-D-glucosamine: step 2/6. In terms of biological role, catalyzes the hydrolysis of UDP-3-O-myristoyl-N-acetylglucosamine to form UDP-3-O-myristoylglucosamine and acetate, the committed step in lipid A biosynthesis. The sequence is that of UDP-3-O-acyl-N-acetylglucosamine deacetylase from Shigella boydii serotype 18 (strain CDC 3083-94 / BS512).